Here is a 315-residue protein sequence, read N- to C-terminus: MNQEYLDFELPIAELEAKIEALRAASDDKVDLTDEIKRLQKKSNELTKKTFANLDAWQVSRMARHPNRPYTLDYIEYIFTEFEELAGDRAFADDKAIVGGLARLDGRPVMVIGHQKGRTVKDKVSRNFGMPAPEGYRKALRLMEMAERFKLPIITFIDTPGAYPGIGAEERGQAEAIARNLREMAQLTVPVICTVIGEGGSGGALAIGVGDKVNMLQYSTYSVISPEGCASILWKSAEKASTAAEVMGLTASRLKELNLIDNIVQEPLGGAHRNYAKIAENLKLRLKEDLAELDGLSKEELLNRRYERLMSYGYC.

The region spanning 38 to 292 (RLQKKSNELT…KLRLKEDLAE (255 aa)) is the CoA carboxyltransferase C-terminal domain.

Belongs to the AccA family. Acetyl-CoA carboxylase is a heterohexamer composed of biotin carboxyl carrier protein (AccB), biotin carboxylase (AccC) and two subunits each of ACCase subunit alpha (AccA) and ACCase subunit beta (AccD).

The protein localises to the cytoplasm. The enzyme catalyses N(6)-carboxybiotinyl-L-lysyl-[protein] + acetyl-CoA = N(6)-biotinyl-L-lysyl-[protein] + malonyl-CoA. The protein operates within lipid metabolism; malonyl-CoA biosynthesis; malonyl-CoA from acetyl-CoA: step 1/1. In terms of biological role, component of the acetyl coenzyme A carboxylase (ACC) complex. First, biotin carboxylase catalyzes the carboxylation of biotin on its carrier protein (BCCP) and then the CO(2) group is transferred by the carboxyltransferase to acetyl-CoA to form malonyl-CoA. The sequence is that of Acetyl-coenzyme A carboxylase carboxyl transferase subunit alpha from Haemophilus influenzae (strain PittEE).